Consider the following 371-residue polypeptide: Spermidine/putrescine import ATP-binding protein PotA (371 aa).

One can recognise an ABC transporter domain in the interval 10–240 (VELRNVTKSY…PKNLFVARFI (231 aa)). 42–49 (GPSGCGKT) is a binding site for ATP.

The protein belongs to the ABC transporter superfamily. Spermidine/putrescine importer (TC 3.A.1.11.1) family. As to quaternary structure, the complex is composed of two ATP-binding proteins (PotA), two transmembrane proteins (PotB and PotC) and a solute-binding protein (PotD).

It is found in the cell inner membrane. It catalyses the reaction ATP + H2O + polyamine-[polyamine-binding protein]Side 1 = ADP + phosphate + polyamineSide 2 + [polyamine-binding protein]Side 1.. Its function is as follows. Part of the ABC transporter complex PotABCD involved in spermidine/putrescine import. Responsible for energy coupling to the transport system. In Haemophilus ducreyi (strain 35000HP / ATCC 700724), this protein is Spermidine/putrescine import ATP-binding protein PotA.